The sequence spans 64 residues: Disintegrin lebein-1-beta (64 aa).

Residues 1 to 64 enclose the Disintegrin domain; the sequence is NSGNPCCDPV…SDCPRNPYKD (64 aa). 4 disulfide bridges follow: cysteine 6-cysteine 29, cysteine 20-cysteine 26, cysteine 25-cysteine 50, and cysteine 38-cysteine 57. The Cell attachment site signature appears at 42–44; the sequence is RGD.

It belongs to the disintegrin family. Dimeric disintegrin subfamily. Heterodimer with subunit alpha; disulfide-linked. As to expression, expressed by the venom gland.

The protein resides in the secreted. In terms of biological role, strongly inhibits ADP-induced platelet aggregation on human platelet-rich plasma. Also avidly binds to the laminin-binding beta-1 integrins (alpha-3/beta-1, alpha-6/beta-1, and alpha-7/beta-1) in an RGD-independent manner. In Macrovipera lebetinus (Levantine viper), this protein is Disintegrin lebein-1-beta.